The primary structure comprises 514 residues: MEMAKANGWAVVCTSTNTNTVPIYSKYTRCTELRRVDDNDIYKLATILDVNGCWRKLMSIIPKRLDAQACSAPGALNYQEIAAKVGLKYTAQQISLIDGTAERLTPGQSISQVMIDEWKTSGKLNERPTVGVLLQLLVHAEIYSAADFVALHFLNEPKPERPTDGPAAHISLDLCSEDLSEDMDVEDGASYQPNTSALNAAVEQARGTGMNLDYFDKHMVRRDKSVPQQLENGTSSTVPVPPPRAARSSRLLKATASNVAPTTASNAPSASNTANVPNLSILNASSKKLAASSEQTLQPQNIPNLSILNGSSEAVLMATTSTTLDAGKSDNASNGRSSASTSTATIPNVPLITLLIENSSCEISDASDATQITSKSTATKTVPDMSTASYNNLPAISALNLNIASGAGELDGNGAKARGDNADNNSSGTNSLSNDDDEQKEDDDDDDDDDVVDVDDEEADVSLPNLSNSDHNDSSLTTVTCTSGENSFEFTNDSSSASNDDYTNNIPNLSELQQ.

5 disordered regions span residues 226–250 (VPQQ…RSSR), 255–274 (TASN…SNTA), 324–343 (LDAG…STST), 366–385 (ASDA…VPDM), and 413–514 (NGAK…ELQQ). Positions 259–274 (VAPTTASNAPSASNTA) are enriched in low complexity. Residues 422–433 (ADNNSSGTNSLS) are compositionally biased toward polar residues. Residues 434-460 (NDDDEQKEDDDDDDDDDVVDVDDEEAD) show a composition bias toward acidic residues. Over residues 477–514 (TTVTCTSGENSFEFTNDSSSASNDDYTNNIPNLSELQQ) the composition is skewed to polar residues.

Maternal and zygotic gene product.

Its subcellular location is the cytoplasm. Its function is as follows. Required for the determination of embryonic dorsoventral polarity. Is involved in transduction of information regulating nuclear import of dorsal protein. This chain is Protein Tube (tub), found in Drosophila virilis (Fruit fly).